A 498-amino-acid chain; its full sequence is Protein adenylyltransferase Fic (498 aa).

The helical transmembrane segment at Phe-43–Ser-63 threads the bilayer. TPR repeat units lie at residues Ala-126–His-159 and Pro-160–His-194. An Inhibitory (S/T)XXXE(G/N) motif motif is present at residues Ser-251–Gly-256. ATP is bound by residues Glu-255 and Val-336 to His-339. The region spanning Ile-305–Asp-440 is the Fido domain. The active site involves His-383. Residues Asp-387 to Arg-394, Tyr-419 to Tyr-420, and Asn-427 contribute to the ATP site.

Belongs to the fic family. As to quaternary structure, homodimer.

The protein localises to the membrane. It carries out the reaction L-tyrosyl-[protein] + ATP = O-(5'-adenylyl)-L-tyrosyl-[protein] + diphosphate. The catalysed reaction is L-threonyl-[protein] + ATP = 3-O-(5'-adenylyl)-L-threonyl-[protein] + diphosphate. The enzyme catalyses 3-O-(5'-adenylyl)-L-threonyl-[protein] + H2O = L-threonyl-[protein] + AMP + H(+). The side chain of Glu-255 determines which of the two opposing activities (AMPylase or de-AMPylase) will take place. In response to endoplasmic reticulum stress, mediates de-AMPylase activity. Adenylyltransferase activity is inhibited by the inhibitory helix present at the N-terminus: Glu-255 binds ATP and competes with ATP-binding at Arg-394, thereby preventing adenylyltransferase activity. In unstressed cells, disengagement of Glu-255 promotes adenylyltransferase activity. Activation dissociates ATP-binding from Glu-255, allowing ordered binding of the entire ATP moiety with the alpha-phosphate in an orientation that is productive for accepting an incoming target hydroxyl side chain. In terms of biological role, protein that can both mediate the addition of adenosine 5'-monophosphate (AMP) to specific residues of target proteins (AMPylation), and the removal of the same modification from target proteins (de-AMPylation), depending on the context. The side chain of Glu-255 determines which of the two opposing activities (AMPylase or de-AMPylase) will take place. Acts as a key regulator of the unfolded protein response (UPR) by mediating AMPylation or de-AMPylation of Hsc70-3/BiP. In unstressed cells, acts as an adenylyltransferase by mediating AMPylation of Hsc70-3/BiP at 'Thr-518', thereby inactivating it. In response to endoplasmic reticulum stress, acts as a phosphodiesterase by mediating removal of ATP (de-AMPylation) from Hsc70-3/BiP at 'Thr-518', leading to restore HSPA5/BiP activity. This Drosophila willistoni (Fruit fly) protein is Protein adenylyltransferase Fic.